The primary structure comprises 248 residues: PF03932 family protein CutC (248 aa).

The protein belongs to the CutC family. Homodimer.

Its subcellular location is the cytoplasm. The sequence is that of PF03932 family protein CutC from Shigella boydii serotype 4 (strain Sb227).